Here is a 312-residue protein sequence, read N- to C-terminus: METALPAAGFLYWVGASTVAYLALRISCWFFTALRVWGLGHEAGVGPWLGEWAVVTGGTDGIGKSYAEELAKRGMKIVLISRSQDKLDQVSSEISEKFKVETKTIAVDFTSEDIYDKIKASLAGLNIGVLVNNVGMSYEYPEYFLDVPDLDNTIKKLITVNALSVCKMTRLVLPGMVERSKGAILNISSASGMYPVPLLTIYSATKAFVDFFSQCLHEEYKSKGVIVQSVLPYYVATKLAKIKRPTWDKPSPETFVKSAMKTIGVQSRTNGYPIHSLVASVSASLPSWLYFKIAMYSGNSIRVRYLKKMKMN.

A helical transmembrane segment spans residues 4 to 24 (ALPAAGFLYWVGASTVAYLAL). Position 50–79 (50–79 (GEWAVVTGGTDGIGKSYAEELAKRGMKIVL)) interacts with NADP(+). The next 2 membrane-spanning stretches (helical) occupy residues 182-202 (GAIL…LTIY) and 271-291 (GYPI…WLYF). Serine 189 is a binding site for substrate. The active-site Proton acceptor is tyrosine 202. Positions 308 to 312 (KMKMN) match the Di-lysine motif motif.

Belongs to the short-chain dehydrogenases/reductases (SDR) family. 17-beta-HSD 3 subfamily.

Its subcellular location is the endoplasmic reticulum membrane. It catalyses the reaction a very-long-chain (3R)-3-hydroxyacyl-CoA + NADP(+) = a very-long-chain 3-oxoacyl-CoA + NADPH + H(+). The enzyme catalyses 17beta-estradiol + NAD(+) = estrone + NADH + H(+). The catalysed reaction is 17beta-estradiol + NADP(+) = estrone + NADPH + H(+). It carries out the reaction 3-oxooctadecanoyl-CoA + NADPH + H(+) = (3R)-hydroxyoctadecanoyl-CoA + NADP(+). It catalyses the reaction (7Z,10Z,13Z,16Z)-3-oxodocosatetraenoyl-CoA + NADPH + H(+) = (3R)-hydroxy-(7Z,10Z,13Z,16Z)-docosatetraenoyl-CoA + NADP(+). The enzyme catalyses 3-oxo-(7Z,10Z,13Z,16Z,19Z)-docosapentaenoyl-CoA + NADPH + H(+) = (3R)-hydroxy-(7Z,10Z,13Z,16Z,19Z)-docosapentaenoyl-CoA + NADP(+). The catalysed reaction is (8Z,11Z,14Z)-3-oxoeicosatrienoyl-CoA + NADPH + H(+) = (3R)-hydroxy-(8Z,11Z,14Z)-eicosatrienoyl-CoA + NADP(+). It participates in lipid metabolism; fatty acid biosynthesis. Its pathway is steroid biosynthesis; estrogen biosynthesis. In terms of biological role, catalyzes the second of the four reactions of the long-chain fatty acids elongation cycle. This endoplasmic reticulum-bound enzymatic process, allows the addition of two carbons to the chain of long- and very long-chain fatty acids/VLCFAs per cycle. This enzyme has a 3-ketoacyl-CoA reductase activity, reducing 3-ketoacyl-CoA to 3-hydroxyacyl-CoA, within each cycle of fatty acid elongation. Thereby, it may participate in the production of VLCFAs of different chain lengths that are involved in multiple biological processes as precursors of membrane lipids and lipid mediators. May also catalyze the transformation of estrone (E1) into estradiol (E2) and play a role in estrogen formation. This chain is Very-long-chain 3-oxoacyl-CoA reductase (HSD17B12), found in Bos taurus (Bovine).